The chain runs to 623 residues: Arginine--tRNA ligase (623 aa).

The 'HIGH' region signature appears at 116–126; it reads ANPIHPLHVGH.

It belongs to the class-I aminoacyl-tRNA synthetase family.

Its subcellular location is the cytoplasm. The catalysed reaction is tRNA(Arg) + L-arginine + ATP = L-arginyl-tRNA(Arg) + AMP + diphosphate. In Sulfurisphaera tokodaii (strain DSM 16993 / JCM 10545 / NBRC 100140 / 7) (Sulfolobus tokodaii), this protein is Arginine--tRNA ligase.